Consider the following 1167-residue polypeptide: Chromosome partition protein Smc (1167 aa).

32 to 39 (PNGCGKSN) lines the ATP pocket. 5 coiled-coil regions span residues 170 to 274 (ISKY…RIET), 310 to 390 (QREL…HNRD), 468 to 500 (GLQEQQRASQGELAEVRKQAQAARGRLSSLETL), 653 to 870 (ALLR…ERAL), and 982 to 1011 (EYLDAQNLDLNTALETLEEAIRKIDRETRG).

Belongs to the SMC family. In terms of assembly, homodimer.

It is found in the cytoplasm. In terms of biological role, required for chromosome condensation and partitioning. In Xanthomonas oryzae pv. oryzae (strain KACC10331 / KXO85), this protein is Chromosome partition protein Smc.